The following is an 816-amino-acid chain: Phosphatidylinositol 4-kinase beta (816 aa).

3 disordered regions span residues M1 to L30, E101 to R120, and A248 to S318. Position 2 is an N-acetylglycine (G2). The segment at G2–V68 is interaction with ACBD3. The region spanning C52–S242 is the PIK helical domain. Position 258 is a phosphoserine (S258). T263 carries the phosphothreonine modification. Residues S266, S275, S277, S284, and S294 each carry the phosphoserine modification. Composition is skewed to polar residues over residues D278–K297 and S306–S318. S428 carries the phosphoserine modification. T438 is subject to Phosphothreonine. The residue at position 511 (S511) is a Phosphoserine. T517 and T519 each carry phosphothreonine. Residues E535–T801 enclose the PI3K/PI4K catalytic domain. The segment at V541 to G547 is G-loop. Residues Q668–N676 form a catalytic loop region. An activation loop region spans residues H687–T711.

The protein belongs to the PI3/PI4-kinase family. Type III PI4K subfamily. In terms of assembly, interacts with ARF1 and ARF3 in the Golgi complex, but not with ARF4, ARF5 or ARF6. Interacts with NCS1/FREQ in a calcium-independent manner. Interacts with CALN1/CABP8 and CALN2/CABP7; in a calcium-dependent manner; this interaction competes with NCS1/FREQ binding. Interacts with ACBD3. Interacts with ARMH3, YWHAB, YWHAE, YWHAG, YWHAH, YWHAQ, YWHAZ and SFN. Interacts with GGA2 (via VHS domain); the interaction is important for PI4KB location at the Golgi apparatus membrane. Interacts with ATG9A. It depends on Mg(2+) as a cofactor. The cofactor is Mn(2+).

It localises to the endomembrane system. The protein resides in the mitochondrion outer membrane. It is found in the rough endoplasmic reticulum membrane. The protein localises to the golgi apparatus. Its subcellular location is the golgi apparatus membrane. It carries out the reaction a 1,2-diacyl-sn-glycero-3-phospho-(1D-myo-inositol) + ATP = a 1,2-diacyl-sn-glycero-3-phospho-(1D-myo-inositol 4-phosphate) + ADP + H(+). Inhibited by wortmannin. Increased kinase activity upon interaction with NCS1/FREQ. Functionally, phosphorylates phosphatidylinositol (PI) in the first committed step in the production of the second messenger inositol-1,4,5,-trisphosphate (PIP). May regulate Golgi disintegration/reorganization during mitosis, possibly via its phosphorylation. Involved in Golgi-to-plasma membrane trafficking. The sequence is that of Phosphatidylinositol 4-kinase beta (PI4KB) from Plecturocebus moloch (Dusky titi monkey).